The chain runs to 313 residues: Antiviral protein I (313 aa).

Positions 1–22 (MKSMLVVTISIWLILAPTSTWA) are cleaved as a signal peptide. Disulfide bonds link cysteine 56-cysteine 281 and cysteine 107-cysteine 128. Tyrosine 94 is an active-site residue. Valine 95 is a substrate binding site. Residue serine 143 coordinates substrate. Tyrosine 145 is a catalytic residue. Position 197 (serine 197) interacts with substrate. Residues glutamate 198 and arginine 201 contribute to the active site. Arginine 201 contributes to the substrate binding site. The propeptide occupies 286–313 (NQNAMFPQLIMSTYYNYMVNLGDLFEGF).

The protein belongs to the ribosome-inactivating protein family. Type 1 RIP subfamily. As to quaternary structure, monomer. Expressed in spring leaves (at protein level). Expressed in roots (at protein level).

The enzyme catalyses Endohydrolysis of the N-glycosidic bond at one specific adenosine on the 28S rRNA.. In terms of biological role, possesses antiviral potency. Inhibits viral infection of plants (tobacco mosaic virus). Inhibits protein synthesis. Releases both adenine and guanine from Escherichia coli rRNA in vitro. Activity on guanine is 20 times slower than that on adenine. This is Antiviral protein I (PAP1) from Phytolacca americana (American pokeweed).